Consider the following 580-residue polypeptide: PX domain-containing protein kinase-like protein (580 aa).

The PX domain occupies 14-126 (LDDTVPLTAA…KFLDPNNYSA (113 aa)). The Protein kinase domain maps to 88-481 (FIAERQKGLQ…VENSEEQPVK (394 aa)). The interval 433 to 551 (EQKQIHQHRR…LPQAVNGVNR (119 aa)) is disordered. Composition is skewed to basic residues over residues 437 to 448 (IHQHRRLTRAQS) and 457 to 469 (KRRK…KSKR). Positions 483–514 (SNANNSAGSGASSPLTSPSSPTPPSTAGLSSA) are enriched in low complexity. Pro residues predominate over residues 515–531 (LPPPPPPPPPPPPPAGP). One can recognise a WH2 domain in the interval 549 to 568 (VNRGALLSSIQNFQKGTLRK).

This sequence belongs to the protein kinase superfamily.

The protein localises to the cytoplasm. It localises to the cell membrane. Binds to and modulates brain Na,K-ATPase subunits ATP1B1 and ATP1B3 and may thereby participate in the regulation of electrical excitability and synaptic transmission. May not display kinase activity. The protein is PX domain-containing protein kinase-like protein of Rattus norvegicus (Rat).